Consider the following 321-residue polypeptide: MDKKISISQIKEVVQQAYEQVKGNTGGKNADYIPYLANIDKNLFGISVCLLNGQTITVGDFDYRFGIESVSKVHTAILILRQYGAQKVLEMIGADATGLPFNSIIAILLENDHPSTPLVNAGAISACSMVTPIGNSDKKWDAIVQNITDLCGSAPQLIEELYKSETATNFNNRSIAWLLKNYNRIYDDPNMSLDLYTRQCSLGVTAQMLSVAAGTVANGGVNPVTKKQVFDAELTPKITSMIATVGFYEHSGDWMYTSGIPAKTGVGGGVMGVLPGVFGVSAFAPPLDGSGNSVKAQLAIKYIMNKLGLNVFNGARVTIVD.

7 residues coordinate substrate: Ser-69, Asn-120, Glu-165, Asn-172, Tyr-196, Tyr-248, and Val-266.

This sequence belongs to the glutaminase family. As to quaternary structure, homotetramer.

The catalysed reaction is L-glutamine + H2O = L-glutamate + NH4(+). The polypeptide is Glutaminase (Bacteroides fragilis (strain ATCC 25285 / DSM 2151 / CCUG 4856 / JCM 11019 / LMG 10263 / NCTC 9343 / Onslow / VPI 2553 / EN-2)).